The chain runs to 122 residues: Large ribosomal subunit protein uL14c (122 aa).

It belongs to the universal ribosomal protein uL14 family. Part of the 50S ribosomal subunit.

It localises to the plastid. It is found in the chloroplast. In terms of biological role, binds to 23S rRNA. This chain is Large ribosomal subunit protein uL14c, found in Drimys granadensis.